Here is a 238-residue protein sequence, read N- to C-terminus: MAVEGGMKCVKFLLYVLLLAFCACAVGLIAVGVGAQLVLSQTIIQGATPGSLLPVVIIAVGVFLFLVAFVGCCGACKENYCLMITFAIFLSLIMLVEVAAAIAGYVFRDKVMSEFNNNFRQQMENYPKNNHTASILDRMQADFKCCGAANYTDWEKIPSMSKNRVPDSCCINVTVGCGINFNEKAIHKEGCVEKIGGWLRKNVLVVAAAALGIAFVEVLGIVFACCLVKSIRSGYEVM.

The Cytoplasmic portion of the chain corresponds to A2–K11. Residues F12–G32 traverse the membrane as a helical segment. Residues V33 to S51 are Extracellular-facing. Residues L52–C72 traverse the membrane as a helical segment. Over C73 to C81 the chain is Cytoplasmic. The chain crosses the membrane as a helical span at residues L82–I102. At A103–V203 the chain is on the extracellular side. N-linked (GlcNAc...) asparagine glycosylation is found at N130, N150, and N172. Residues L204 to A224 form a helical membrane-spanning segment. The Cytoplasmic segment spans residues C225–M238. A Lysosomal targeting motif motif is present at residues G234–M238.

It belongs to the tetraspanin (TM4SF) family. In terms of assembly, interacts with TIMP1 and ITGB1 and recruits TIMP1 to ITGB1. Interacts with CD9. Identified in a complex with CD9 and ITGB3. Interacts with PMEL. Interacts with KDR/VEGFR2; identified in a complex with ITGB1 and KDR/VEGFR2 and is required to recruit KDR to ITGB1 complexes. Interacts with SYT7. In terms of processing, palmitoylated at a low, basal level in unstimulated platelets. The level of palmitoylation increases when platelets are activated by thrombin (in vitro). In terms of tissue distribution, detected in platelets (at protein level). Dysplastic nevi, radial growth phase primary melanomas, hematopoietic cells, tissue macrophages.

The protein resides in the cell membrane. It localises to the lysosome membrane. It is found in the late endosome membrane. Its subcellular location is the endosome. The protein localises to the multivesicular body. The protein resides in the melanosome. It localises to the secreted. It is found in the extracellular exosome. Its subcellular location is the cell surface. Functionally, functions as a cell surface receptor for TIMP1 and plays a role in the activation of cellular signaling cascades. Plays a role in the activation of ITGB1 and integrin signaling, leading to the activation of AKT, FAK/PTK2 and MAP kinases. Promotes cell survival, reorganization of the actin cytoskeleton, cell adhesion, spreading and migration, via its role in the activation of AKT and FAK/PTK2. Plays a role in VEGFA signaling via its role in regulating the internalization of KDR/VEGFR2. Plays a role in intracellular vesicular transport processes, and is required for normal trafficking of the PMEL luminal domain that is essential for the development and maturation of melanocytes. Plays a role in the adhesion of leukocytes onto endothelial cells via its role in the regulation of SELP trafficking. May play a role in mast cell degranulation in response to Ms4a2/FceRI stimulation, but not in mast cell degranulation in response to other stimuli. This chain is CD63 antigen (CD63), found in Homo sapiens (Human).